The chain runs to 195 residues: ATP-dependent Clp protease proteolytic subunit (195 aa).

Catalysis depends on Ser-99, which acts as the Nucleophile. His-124 is an active-site residue.

Belongs to the peptidase S14 family. As to quaternary structure, fourteen ClpP subunits assemble into 2 heptameric rings which stack back to back to give a disk-like structure with a central cavity, resembling the structure of eukaryotic proteasomes.

The protein resides in the cytoplasm. It catalyses the reaction Hydrolysis of proteins to small peptides in the presence of ATP and magnesium. alpha-casein is the usual test substrate. In the absence of ATP, only oligopeptides shorter than five residues are hydrolyzed (such as succinyl-Leu-Tyr-|-NHMec, and Leu-Tyr-Leu-|-Tyr-Trp, in which cleavage of the -Tyr-|-Leu- and -Tyr-|-Trp bonds also occurs).. Its function is as follows. Cleaves peptides in various proteins in a process that requires ATP hydrolysis. Has a chymotrypsin-like activity. Plays a major role in the degradation of misfolded proteins. The sequence is that of ATP-dependent Clp protease proteolytic subunit from Coxiella burnetii (strain CbuG_Q212) (Coxiella burnetii (strain Q212)).